We begin with the raw amino-acid sequence, 419 residues long: Transcription termination factor Rho (419 aa).

The region spanning 48 to 123 is the Rho RNA-BD domain; sequence GFTCSGTLEI…VRLDSINGDH (76 aa). Residues 169-174, 181-186, and Arg212 contribute to the ATP site; these read GKGQRA and KIGKTV.

The protein belongs to the Rho family. Homohexamer. The homohexamer assembles into an open ring structure.

Its function is as follows. Facilitates transcription termination by a mechanism that involves Rho binding to the nascent RNA, activation of Rho's RNA-dependent ATPase activity, and release of the mRNA from the DNA template. The polypeptide is Transcription termination factor Rho (Neisseria gonorrhoeae).